The following is a 312-amino-acid chain: Putative olfactory receptor 1F2 (312 aa).

Over 1-25 (MERDKPVSVSEFLLLGLSRQPQQQH) the chain is Extracellular. Residues 26 to 49 (LLFVFFLSMYLATVLGNLLIILAI) form a helical membrane-spanning segment. The Cytoplasmic segment spans residues 50-57 (SIDSRLHT). The helical transmembrane segment at 58–78 (PMYFFLSNMSFVDNCFSTTVP) threads the bilayer. The Extracellular segment spans residues 79–99 (KMLANHILRTQTISFSGCLMQ). A disulfide bridge links cysteine 96 with cysteine 188. A helical membrane pass occupies residues 100–119 (MYFISELADMDNFLLAVMAY). At 120–138 (DRFVAVCRPLHYTAKMIHQ) the chain is on the cytoplasmic side. The helical transmembrane segment at 139–157 (LCALLVTGSWVVANSNALL) threads the bilayer. The Extracellular segment spans residues 158–195 (HTLLMARLSFCADNTIPHIFCDVTPLLKLSCSDTHLSE). The helical transmembrane segment at 196–218 (VMILTEAALVTITPFLCLLASYM) threads the bilayer. Topologically, residues 219 to 235 (HITCVVLRVPSTKGRWK) are cytoplasmic. Residues 236-258 (AFSTCGSHLAVVLLFYGTIMSPY) traverse the membrane as a helical segment. The Extracellular segment spans residues 259–271 (FRTSSSHSAQRDI). Residues 272–291 (AAAVRFTVVTPVMNPLIYSL) traverse the membrane as a helical segment. Residues 292 to 312 (RNKDIKGALVKVVAVKFFSVQ) are Cytoplasmic-facing.

It belongs to the G-protein coupled receptor 1 family.

The protein resides in the cell membrane. In terms of biological role, odorant receptor. This is Putative olfactory receptor 1F2 (OR1F2P) from Homo sapiens (Human).